The following is a 110-amino-acid chain: Large ribosomal subunit protein uL22 (110 aa).

It belongs to the universal ribosomal protein uL22 family. As to quaternary structure, part of the 50S ribosomal subunit.

Functionally, this protein binds specifically to 23S rRNA; its binding is stimulated by other ribosomal proteins, e.g. L4, L17, and L20. It is important during the early stages of 50S assembly. It makes multiple contacts with different domains of the 23S rRNA in the assembled 50S subunit and ribosome. Its function is as follows. The globular domain of the protein is located near the polypeptide exit tunnel on the outside of the subunit, while an extended beta-hairpin is found that lines the wall of the exit tunnel in the center of the 70S ribosome. The protein is Large ribosomal subunit protein uL22 of Idiomarina loihiensis (strain ATCC BAA-735 / DSM 15497 / L2-TR).